We begin with the raw amino-acid sequence, 160 residues long: Endoplasmic reticulum transmembrane protein 2 (160 aa).

Residues 1–2 lie on the Lumenal side of the membrane; it reads MG. The chain crosses the membrane as a helical span at residues 3–23; sequence VYLAVLFSLLVIEMAILFILV. The Cytoplasmic segment spans residues 24 to 45; sequence LPLPQRMRRWLYIRYSIISTNK. A helical membrane pass occupies residues 46–66; sequence KFRTYMVGIMIFVGLLFIDSW. Residues 67 to 103 lie on the Lumenal side of the membrane; sequence KRSQIRVSTYRNQKNPYIINSVTPVDALASRAYNQRN. A helical transmembrane segment spans residues 104 to 124; sequence VYISGFIIYFYICILTVMSIL. Residues 125-160 are Cytoplasmic-facing; sequence RRIVEWNDKMKAGDDILKEKLRRKQKYLEELQKKKF. The Di-lysine motif signature appears at 157–160; it reads KKKF.

This sequence belongs to the BCAP29/BCAP31 family.

The protein resides in the endoplasmic reticulum membrane. In terms of biological role, may play a role in anterograde transport of membrane proteins from the endoplasmic reticulum to the Golgi. In Saccharomyces cerevisiae (strain ATCC 204508 / S288c) (Baker's yeast), this protein is Endoplasmic reticulum transmembrane protein 2 (YET2).